Reading from the N-terminus, the 242-residue chain is 1-(5-phosphoribosyl)-5-[(5-phosphoribosylamino)methylideneamino] imidazole-4-carboxamide isomerase (242 aa).

Catalysis depends on Asp-8, which acts as the Proton acceptor. The active-site Proton donor is Asp-129.

It belongs to the HisA/HisF family.

The protein localises to the cytoplasm. It catalyses the reaction 1-(5-phospho-beta-D-ribosyl)-5-[(5-phospho-beta-D-ribosylamino)methylideneamino]imidazole-4-carboxamide = 5-[(5-phospho-1-deoxy-D-ribulos-1-ylimino)methylamino]-1-(5-phospho-beta-D-ribosyl)imidazole-4-carboxamide. It participates in amino-acid biosynthesis; L-histidine biosynthesis; L-histidine from 5-phospho-alpha-D-ribose 1-diphosphate: step 4/9. The protein is 1-(5-phosphoribosyl)-5-[(5-phosphoribosylamino)methylideneamino] imidazole-4-carboxamide isomerase of Clostridium botulinum (strain Kyoto / Type A2).